A 244-amino-acid chain; its full sequence is Phosphoadenosine 5'-phosphosulfate reductase (244 aa).

Residue cysteine 239 is the Nucleophile; cysteine thiosulfonate intermediate of the active site.

The protein belongs to the PAPS reductase family. CysH subfamily.

The protein resides in the cytoplasm. The enzyme catalyses [thioredoxin]-disulfide + sulfite + adenosine 3',5'-bisphosphate + 2 H(+) = [thioredoxin]-dithiol + 3'-phosphoadenylyl sulfate. It participates in sulfur metabolism; hydrogen sulfide biosynthesis; sulfite from sulfate: step 3/3. Functionally, catalyzes the formation of sulfite from phosphoadenosine 5'-phosphosulfate (PAPS) using thioredoxin as an electron donor. This chain is Phosphoadenosine 5'-phosphosulfate reductase, found in Salmonella choleraesuis (strain SC-B67).